A 392-amino-acid chain; its full sequence is MDKQQFLAEYQDVFKEPGKDVFFSPGRINVIGEHTDYNGGHVFPCAISIGTYGVYGPREDTTVAIYSANSAKEEDSKIITFDINDTEPQNAKDEKWVNYFKGMLVYLKQRGFKIDHGFNLYIHGFLPYGSGLSSSASIEMLMGNILKDEFNLDIDEIELVKLGQKTENDFVGLNSGIMDQFAVGMGKENNAIYLDCNTLEYKYLPLELGDYEIIIMSTNKNHSLAGSKYNERVQECEEAVKRLNKKLDINKLGELDSDTFDQYTYLIDDDTLIRRARHAVSENERTKKAIDAMEKGDLEELGRLINASHVSLKYDYEVTGKELDTLAENAWNQPGCLGARMVGGGFAGSAIAIVKKSEAENFKKNVGKIYRDKIGYDASFYDAEVVDGPHKL.

Position 33 to 36 (33 to 36) interacts with substrate; the sequence is EHTD. Residues Ser67 and 129–135 contribute to the ATP site; that span reads GSGLSSS. Mg(2+) contacts are provided by Ser135 and Glu167. The active-site Proton acceptor is Asp179. Tyr229 is a binding site for substrate.

Belongs to the GHMP kinase family. GalK subfamily.

The protein resides in the cytoplasm. It catalyses the reaction alpha-D-galactose + ATP = alpha-D-galactose 1-phosphate + ADP + H(+). The protein operates within carbohydrate metabolism; galactose metabolism. Catalyzes the transfer of the gamma-phosphate of ATP to D-galactose to form alpha-D-galactose-1-phosphate (Gal-1-P). This chain is Galactokinase, found in Limosilactobacillus reuteri (strain DSM 20016) (Lactobacillus reuteri).